Consider the following 302-residue polypeptide: Sulfate adenylyltransferase subunit 2 (302 aa).

It belongs to the PAPS reductase family. CysD subfamily. Heterodimer composed of CysD, the smaller subunit, and CysN.

The catalysed reaction is sulfate + ATP + H(+) = adenosine 5'-phosphosulfate + diphosphate. It participates in sulfur metabolism; hydrogen sulfide biosynthesis; sulfite from sulfate: step 1/3. Its function is as follows. With CysN forms the ATP sulfurylase (ATPS) that catalyzes the adenylation of sulfate producing adenosine 5'-phosphosulfate (APS) and diphosphate, the first enzymatic step in sulfur assimilation pathway. APS synthesis involves the formation of a high-energy phosphoric-sulfuric acid anhydride bond driven by GTP hydrolysis by CysN coupled to ATP hydrolysis by CysD. The sequence is that of Sulfate adenylyltransferase subunit 2 from Escherichia coli O9:H4 (strain HS).